A 303-amino-acid chain; its full sequence is tRNA pseudouridine synthase A (303 aa).

The active-site Nucleophile is Asp-59. Residue Tyr-128 coordinates substrate.

Belongs to the tRNA pseudouridine synthase TruA family. Homodimer.

The enzyme catalyses uridine(38/39/40) in tRNA = pseudouridine(38/39/40) in tRNA. In terms of biological role, formation of pseudouridine at positions 38, 39 and 40 in the anticodon stem and loop of transfer RNAs. This is tRNA pseudouridine synthase A from Bifidobacterium longum (strain DJO10A).